The chain runs to 601 residues: Probable serine/threonine-protein kinase WNK3 (601 aa).

One can recognise a Protein kinase domain in the interval 34–291 (GRFNEILGKG…ARELLDDPFL (258 aa)). Residues 114 to 117 (TELF) and Lys-164 each bind ATP. Asp-181 (proton acceptor) is an active-site residue. 2 disordered regions span residues 470–498 (GWRP…PGGA) and 551–601 (ADDD…SEQP). Over residues 477-493 (TDDDDDDDLVGGGDDPD) the composition is skewed to acidic residues. The span at 560-571 (LQGSSSDTGGSN) shows a compositional bias: polar residues. Over residues 572–583 (HEQHAMGKDKEV) the composition is skewed to basic and acidic residues.

Belongs to the protein kinase superfamily. Ser/Thr protein kinase family. WNK subfamily.

The catalysed reaction is L-seryl-[protein] + ATP = O-phospho-L-seryl-[protein] + ADP + H(+). The enzyme catalyses L-threonyl-[protein] + ATP = O-phospho-L-threonyl-[protein] + ADP + H(+). This Oryza sativa subsp. japonica (Rice) protein is Probable serine/threonine-protein kinase WNK3 (WNK3).